The sequence spans 113 residues: Small ribosomal subunit protein bS16 (113 aa).

Positions 84-113 (PKPAYTEQPKKSAPKKRAQERAAAAAAAAA) are disordered.

It belongs to the bacterial ribosomal protein bS16 family.

The polypeptide is Small ribosomal subunit protein bS16 (Gluconacetobacter diazotrophicus (strain ATCC 49037 / DSM 5601 / CCUG 37298 / CIP 103539 / LMG 7603 / PAl5)).